The chain runs to 481 residues: Cysteine--tRNA ligase (481 aa).

C29 serves as a coordination point for Zn(2+). The short motif at 31 to 41 is the 'HIGH' region element; sequence PTTYDYIHLGN. 3 residues coordinate Zn(2+): C209, H234, and E238. The short motif at 267–271 is the 'KMSKS' region element; that stretch reads KMSKS. Position 270 (K270) interacts with ATP.

It belongs to the class-I aminoacyl-tRNA synthetase family. As to quaternary structure, monomer. Zn(2+) serves as cofactor.

Its subcellular location is the cytoplasm. The enzyme catalyses tRNA(Cys) + L-cysteine + ATP = L-cysteinyl-tRNA(Cys) + AMP + diphosphate. This chain is Cysteine--tRNA ligase, found in Heliobacterium modesticaldum (strain ATCC 51547 / Ice1).